The primary structure comprises 216 residues: Probable phosphatase SPAC513.02 (216 aa).

Residue His-15 is the Tele-phosphohistidine intermediate of the active site.

Belongs to the phosphoglycerate mutase family. BPG-dependent PGAM subfamily.

The protein resides in the cytoplasm. It is found in the nucleus. The polypeptide is Probable phosphatase SPAC513.02 (Schizosaccharomyces pombe (strain 972 / ATCC 24843) (Fission yeast)).